Consider the following 125-residue polypeptide: Small ribosomal subunit protein uS11 (125 aa).

Residues 101–125 form a disordered region; it reads KDVKDVTPTPHNGTRPPKKILKREK. Positions 116–125 are enriched in basic residues; that stretch reads PPKKILKREK.

The protein belongs to the universal ribosomal protein uS11 family. In terms of assembly, part of the 30S ribosomal subunit. Interacts with proteins S7 and S18. Binds to IF-3.

In terms of biological role, located on the platform of the 30S subunit, it bridges several disparate RNA helices of the 16S rRNA. Forms part of the Shine-Dalgarno cleft in the 70S ribosome. The sequence is that of Small ribosomal subunit protein uS11 from Mycoplasma sp.